A 731-amino-acid chain; its full sequence is Cell death abnormality protein 12 (731 aa).

The ELMO domain maps to 339–485 (AEVQKILDIE…VVLEQLRHVL (147 aa)). One can recognise a PH domain in the interval 544–679 (VRINHLNYLK…WLEGLAELIG (136 aa)). Positions 715-718 (PEIP) match the SH3-binding motif.

Interacts with psr-1. Forms a ternary complex with ced-2 and ced-5.

Its subcellular location is the cytoplasm. Functionally, involved in programmed apoptosis and necrosis. Required for the cell corpse engulfment process. Has roles in the formation of actin halos and distal tip cell migration. Negatively regulates the unc-6/Netrin receptor unc-5 to control distal tip cell migration along the anterior-posterior axis of the body. Plays no role in amphid axon outgrowth. The polypeptide is Cell death abnormality protein 12 (Caenorhabditis elegans).